Reading from the N-terminus, the 404-residue chain is Cysteine--tRNA ligase (404 aa).

Zn(2+) is bound at residue C14. The short motif at 16–26 is the 'HIGH' region element; that stretch reads PTVYSDVHIGN. 3 residues coordinate Zn(2+): C190, H216, and E220. Residues 248–252 carry the 'KMSKS' region motif; that stretch reads KMAKS. K251 is an ATP binding site.

It belongs to the class-I aminoacyl-tRNA synthetase family. As to quaternary structure, monomer. It depends on Zn(2+) as a cofactor.

It is found in the cytoplasm. The enzyme catalyses tRNA(Cys) + L-cysteine + ATP = L-cysteinyl-tRNA(Cys) + AMP + diphosphate. The polypeptide is Cysteine--tRNA ligase (Mesomycoplasma hyopneumoniae (strain 232) (Mycoplasma hyopneumoniae)).